We begin with the raw amino-acid sequence, 338 residues long: Ketol-acid reductoisomerase (NADP(+)) (338 aa).

The KARI N-terminal Rossmann domain maps to 1–181; sequence MQIFYDKDCD…GGGRTGIIET (181 aa). Residues 24–27, arginine 47, serine 50, serine 52, and 82–85 each bind NADP(+); these read YGSQ and DEFQ. Histidine 107 is a catalytic residue. Glycine 133 contacts NADP(+). The region spanning 182 to 327 is the KARI C-terminal knotted domain; sequence SFREETETDL…SKLRAMMPWI (146 aa). 4 residues coordinate Mg(2+): aspartate 190, glutamate 194, glutamate 226, and glutamate 230. Serine 251 lines the substrate pocket.

Belongs to the ketol-acid reductoisomerase family. Requires Mg(2+) as cofactor.

It carries out the reaction (2R)-2,3-dihydroxy-3-methylbutanoate + NADP(+) = (2S)-2-acetolactate + NADPH + H(+). It catalyses the reaction (2R,3R)-2,3-dihydroxy-3-methylpentanoate + NADP(+) = (S)-2-ethyl-2-hydroxy-3-oxobutanoate + NADPH + H(+). It participates in amino-acid biosynthesis; L-isoleucine biosynthesis; L-isoleucine from 2-oxobutanoate: step 2/4. Its pathway is amino-acid biosynthesis; L-valine biosynthesis; L-valine from pyruvate: step 2/4. Its function is as follows. Involved in the biosynthesis of branched-chain amino acids (BCAA). Catalyzes an alkyl-migration followed by a ketol-acid reduction of (S)-2-acetolactate (S2AL) to yield (R)-2,3-dihydroxy-isovalerate. In the isomerase reaction, S2AL is rearranged via a Mg-dependent methyl migration to produce 3-hydroxy-3-methyl-2-ketobutyrate (HMKB). In the reductase reaction, this 2-ketoacid undergoes a metal-dependent reduction by NADPH to yield (R)-2,3-dihydroxy-isovalerate. This is Ketol-acid reductoisomerase (NADP(+)) from Acinetobacter baylyi (strain ATCC 33305 / BD413 / ADP1).